The following is a 428-amino-acid chain: uncharacterized protein (428 aa).

Residues 241 to 351 form the Glutaredoxin domain; it reads KEEEEQSVGK…KLLGGCERVE (111 aa). Positions 386-401 are enriched in acidic residues; it reads EDDDDDDDEGDDDESV. The segment at 386–405 is disordered; sequence EDDDDDDDEGDDDESVKEER.

This is an uncharacterized protein from Arabidopsis thaliana (Mouse-ear cress).